The sequence spans 254 residues: 4-hydroxy-tetrahydrodipicolinate reductase (254 aa).

An NAD(+)-binding site is contributed by 13–18 (GAAGRM). Residue Arg39 coordinates NADP(+). NAD(+)-binding positions include 86–88 (GTT) and 110–113 (AANT). Catalysis depends on His143, which acts as the Proton donor/acceptor. A (S)-2,3,4,5-tetrahydrodipicolinate-binding site is contributed by His144. Lys147 functions as the Proton donor in the catalytic mechanism. A (S)-2,3,4,5-tetrahydrodipicolinate-binding site is contributed by 153-154 (GT).

The protein belongs to the DapB family.

Its subcellular location is the cytoplasm. The catalysed reaction is (S)-2,3,4,5-tetrahydrodipicolinate + NAD(+) + H2O = (2S,4S)-4-hydroxy-2,3,4,5-tetrahydrodipicolinate + NADH + H(+). It carries out the reaction (S)-2,3,4,5-tetrahydrodipicolinate + NADP(+) + H2O = (2S,4S)-4-hydroxy-2,3,4,5-tetrahydrodipicolinate + NADPH + H(+). Its pathway is amino-acid biosynthesis; L-lysine biosynthesis via DAP pathway; (S)-tetrahydrodipicolinate from L-aspartate: step 4/4. Its function is as follows. Catalyzes the conversion of 4-hydroxy-tetrahydrodipicolinate (HTPA) to tetrahydrodipicolinate. The sequence is that of 4-hydroxy-tetrahydrodipicolinate reductase from Zymomonas mobilis subsp. mobilis (strain ATCC 31821 / ZM4 / CP4).